The chain runs to 353 residues: Basic membrane protein C (353 aa).

Residues 1–16 (MFKRFIFITLSLLVFA) form the signal peptide. Cysteine 17 is lipidated: N-palmitoyl cysteine. Cysteine 17 carries S-diacylglycerol cysteine lipidation.

It belongs to the BMP lipoprotein family. Monomer.

It is found in the cell inner membrane. Its function is as follows. May be part of an ABC-type nucleoside uptake system involved in the purine salvage pathway. The protein is Basic membrane protein C (bmpC) of Borreliella burgdorferi (strain ATCC 35210 / DSM 4680 / CIP 102532 / B31) (Borrelia burgdorferi).